Consider the following 655-residue polypeptide: FYVE, RhoGEF and PH domain-containing protein 2 (655 aa).

Ser-10, Ser-39, and Ser-47 each carry phosphoserine. 2 disordered regions span residues 21–52 (NRTPGEAPGSHSLEDQPHSPEHQLSLSPEPWE) and 84–103 (WRRSCQPGVSPGPETQEPEE). Residues 32-41 (SLEDQPHSPE) are compositionally biased toward basic and acidic residues. The 189-residue stretch at 102 to 290 (EEKRVVRELL…FSAAQHSNAA (189 aa)) folds into the DH domain. The region spanning 319 to 418 (TLLREGPVLK…WMQACQAAID (100 aa)) is the PH 1 domain. The FYVE-type zinc-finger motif lies at 458–518 (DKMVTMCMRC…VCLTCYTFLT (61 aa)). Positions 464, 467, 481, 484, 489, 492, 510, and 513 each coordinate Zn(2+). The PH 2 domain maps to 544–641 (QSLVCSFLQL…WVTAIKRAAS (98 aa)). Thr-644 is modified (phosphothreonine). Residue Ser-654 is modified to Phosphoserine.

Lymph node, spleen, B-lymphocytes and macrophages (at protein level). Expressed at high levels in lymph node, spleen, B-lymphocytes and bone marrow macrophages. Expressed at lower levels in mature bone marrow dendritic cells. In both immature and mature B-cells, expression is down-regulated by prior B-cell receptor signaling. Expression remains high in resting B and memory cells but declines upon differentiation into plasma cells.

It is found in the cytoplasm. The protein localises to the nucleus. It localises to the early endosome. Its subcellular location is the early endosome membrane. The protein resides in the cell projection. It is found in the ruffle membrane. The protein localises to the cytoskeleton. Its function is as follows. Activates CDC42, a member of the Ras-like family of Rho- and Rac proteins, by exchanging bound GDP for free GTP. Activates JNK1 via CDC42 but not RAC1. Binds to phosphatidylinositol 4,5-bisphosphate, phosphatidylinositol 3,4,5-trisphosphate, phosphatidylinositol 5-monophosphate, phosphatidylinositol 4-monophosphate and phosphatidylinositol 3-monophosphate. The polypeptide is FYVE, RhoGEF and PH domain-containing protein 2 (Fgd2) (Mus musculus (Mouse)).